Reading from the N-terminus, the 422-residue chain is MTNKEIFEESKEYMPGGVNSPVRAYMDLNIDPPIIKSGKDSHLFDEEGKEYIDFIEAWGPMILGHKNQKVLNEVKEVLDEGVGFGAPTSLELKLAKYICTTVDNVEMIRMVNSGTEATMSAVKLARGYTKRDKIIKFAGCYHGHFDGFLVEAGSGVLTQNIPGSPGVPKGSIENTLIAEYNNVESVEVLFNKYKDEIAAVIIEPVAGNMGVIPAKKEFLVKLRELCTENQSILIFDEVMSGFRVAYKGAQSLYGVTPDLITFAKIMGGGFPCGAYGGKKEIMKQLSPLGPVYQAGTMSGNPVVMAAGYASLRQLHENPEYYTYMDKLGSKLEAGILEISKEKGIPLVVNRCVNMMTIFFNKAKEVKSYSDAKASDTKMFARFAEHMITSGIYVPPSQFEAMFLGVKHTEEDIERFLDVMKKL.

At K264 the chain carries N6-(pyridoxal phosphate)lysine.

It belongs to the class-III pyridoxal-phosphate-dependent aminotransferase family. HemL subfamily. As to quaternary structure, homodimer. The cofactor is pyridoxal 5'-phosphate.

Its subcellular location is the cytoplasm. It catalyses the reaction (S)-4-amino-5-oxopentanoate = 5-aminolevulinate. The protein operates within porphyrin-containing compound metabolism; protoporphyrin-IX biosynthesis; 5-aminolevulinate from L-glutamyl-tRNA(Glu): step 2/2. In Clostridium acetobutylicum (strain ATCC 824 / DSM 792 / JCM 1419 / IAM 19013 / LMG 5710 / NBRC 13948 / NRRL B-527 / VKM B-1787 / 2291 / W), this protein is Glutamate-1-semialdehyde 2,1-aminomutase.